Here is a 442-residue protein sequence, read N- to C-terminus: Kelch domain-containing protein 10 (442 aa).

Residues 1-57 form a disordered region; sequence MSAAQGWDRNRRRGGGAAGAGGGGSGAGGGSGGSGGRGTGQLNRFVQLSGRPHLPGK. At Arg-13 the chain carries Omega-N-methylarginine. Over residues 15 to 39 the composition is skewed to gly residues; it reads GGAAGAGGGGSGAGGGSGGSGGRGT. 6 Kelch repeats span residues 87 to 154, 155 to 198, 199 to 260, 261 to 319, 320 to 364, and 365 to 403; these read RPPP…PREL, ASMS…ALLS, CRGK…PEER, YRHE…RRCH, SCVQ…PEPV, and YFHCAAVTPAGCMYIHGGVVNIHENKRTGSLFKIWLVVP. Residues 401 to 442 are interaction with CUL2; sequence VVPSLLELAWEKLLAAFPNLANLSRTQLLHLGLTQGLIERLK.

The protein belongs to the KLHDC10 family. Component of a CRL2 E3 ubiquitin-protein ligase complex, also named ECS (Elongin BC-CUL2/5-SOCS-box protein) complex, composed of CUL2, Elongin BC (ELOB and ELOC), RBX1 and substrate-specific adapter KLHDC10. Interacts (via the 6 Kelch repeats) with PPP5C.

Its subcellular location is the nucleus. The protein resides in the cytoplasm. Its pathway is protein modification; protein ubiquitination. Functionally, substrate-recognition component of a Cul2-RING (CRL2) E3 ubiquitin-protein ligase complex of the DesCEND (destruction via C-end degrons) pathway, which recognizes a C-degron located at the extreme C-terminus of target proteins, leading to their ubiquitination and degradation. The C-degron recognized by the DesCEND pathway is usually a motif of less than ten residues and can be present in full-length proteins, truncated proteins or proteolytically cleaved forms. The CRL2(KLHDC10) complex specifically recognizes proteins with a proline-glycine (Pro-Gly) or an alanine tail (CAT tail) at the C-terminus, leading to their ubiquitination and degradation. The CRL2(KLHDC10) complex is involved in the ribosome-associated quality control (RQC) pathway, which mediates the extraction of incompletely synthesized nascent chains from stalled ribosomes: CRL2(KLHDC10) acts downstream of NEMF and recognizes CAT tails associated with stalled nascent chains, leading to their ubiquitination and degradation. Participates in the oxidative stress-induced cell death through MAP3K5 activation. Inhibits PPP5C phosphatase activity on MAP3K5. Acts as a regulator of necroptosis. The polypeptide is Kelch domain-containing protein 10 (Homo sapiens (Human)).